Consider the following 141-residue polypeptide: ATP synthase epsilon chain (141 aa).

The protein belongs to the ATPase epsilon chain family. As to quaternary structure, F-type ATPases have 2 components, CF(1) - the catalytic core - and CF(0) - the membrane proton channel. CF(1) has five subunits: alpha(3), beta(3), gamma(1), delta(1), epsilon(1). CF(0) has three main subunits: a, b and c.

It is found in the cell membrane. In terms of biological role, produces ATP from ADP in the presence of a proton gradient across the membrane. This is ATP synthase epsilon chain from Lactococcus lactis subsp. cremoris (strain MG1363).